Reading from the N-terminus, the 493-residue chain is Acetyl-coenzyme A carboxylase carboxyl transferase subunit beta (493 aa).

The CoA carboxyltransferase N-terminal domain occupies 231–493 (LWVQCENCYG…FKLHAFFPLN (263 aa)). Positions 235, 238, 254, and 257 each coordinate Zn(2+). The segment at 235–257 (CENCYGLNYKKFLKSKINLCEQC) adopts a C4-type zinc-finger fold.

It belongs to the AccD/PCCB family. Acetyl-CoA carboxylase is a heterohexamer composed of biotin carboxyl carrier protein, biotin carboxylase and 2 subunits each of ACCase subunit alpha and ACCase plastid-coded subunit beta (accD). Requires Zn(2+) as cofactor.

The protein resides in the plastid stroma. The catalysed reaction is N(6)-carboxybiotinyl-L-lysyl-[protein] + acetyl-CoA = N(6)-biotinyl-L-lysyl-[protein] + malonyl-CoA. It participates in lipid metabolism; malonyl-CoA biosynthesis; malonyl-CoA from acetyl-CoA: step 1/1. Functionally, component of the acetyl coenzyme A carboxylase (ACC) complex. Biotin carboxylase (BC) catalyzes the carboxylation of biotin on its carrier protein (BCCP) and then the CO(2) group is transferred by the transcarboxylase to acetyl-CoA to form malonyl-CoA. The polypeptide is Acetyl-coenzyme A carboxylase carboxyl transferase subunit beta (Epifagus virginiana (Beechdrops)).